A 384-amino-acid chain; its full sequence is N-acetylneuraminate epimerase (384 aa).

The signal sequence occupies residues 1 to 29 (MGMQMKNFKKMMTLMALCLSVAITTSGYA). 7 Kelch repeats span residues 51 to 95 (VIYV…VFLN), 97 to 149 (KLYV…VKLN), 151 to 184 (TMVL…KVIY), 185 to 230 (NYFN…VMEN), 233 to 282 (LMLI…LAGA), 304 to 353 (QNYT…SYGD), and 355 to 384 (VFLI…LLIK). The Proton acceptor role is filled by E239.

The protein belongs to the NanM family. In terms of assembly, homodimer.

Its subcellular location is the periplasm. It catalyses the reaction N-acetyl-alpha-neuraminate = N-acetyl-beta-neuraminate. Functionally, converts alpha-N-acetylneuranimic acid (Neu5Ac) to the beta-anomer, accelerating the equilibrium between the alpha- and beta-anomers. Probably facilitates sialidase-negative bacteria to compete successfully for limited amounts of extracellular Neu5Ac, which is likely taken up in the beta-anomer. In addition, the rapid removal of sialic acid from solution might be advantageous to the bacterium to damp down host responses. The polypeptide is N-acetylneuraminate epimerase (Salmonella typhi).